The primary structure comprises 506 residues: Cytochrome P450 71B8 (506 aa).

A helical membrane pass occupies residues 5 to 25; sequence ILLCFFFLFPLLLTLFKKLLP. Cys-443 provides a ligand contact to heme.

It belongs to the cytochrome P450 family. Heme is required as a cofactor.

The protein resides in the membrane. The sequence is that of Cytochrome P450 71B8 (CYP71B8) from Arabidopsis thaliana (Mouse-ear cress).